The sequence spans 212 residues: uncharacterized protein (212 aa).

Disordered regions lie at residues 1-148 and 168-190; these read MEKD…LNDL and EVVT…LSED. A compositionally biased stretch (basic and acidic residues) spans 61–70; that stretch reads KELESEDQGK. Polar residues predominate over residues 71–85; the sequence is DPSSNAEDASCQKNL. 3 stretches are compositionally biased toward basic and acidic residues: residues 99–115, 124–144, and 168–180; these read LGHE…KSDL, EGEH…ESIK, and EVVT…EKPS.

This is an uncharacterized protein from Homo sapiens (Human).